The primary structure comprises 230 residues: MSEIKDIVVQGLWKNNSALVQLLGLCPLLAVTSTATNALGLGLATTLVLTLTNLTVSTLRRWTPAEIRIPIYVMIIASVVSAVQMLINAYAFGLYQSLGIFIPLIVTNCIVVGRAEAFAAKKGPWLSALDGFSIGMGATGAMFVLGSLREILGNGTLFDGADSLLGGWAKVLRVEIFHTDSPFLLAMLPPGAFIGLGLMLAVKYLIDEKMKKRRAETAPSAVPAGETGKV.

The next 5 membrane-spanning stretches (helical) occupy residues 22 to 42 (LLGL…LGLG), 63 to 83 (TPAE…VSAV), 86 to 106 (LINA…PLIV), 125 to 145 (WLSA…MFVL), and 182 to 202 (PFLL…MLAV).

The protein belongs to the NqrDE/RnfAE family. As to quaternary structure, the complex is composed of six subunits: RsxA, RsxB, RsxC, RsxD, RsxE and RsxG.

It localises to the cell inner membrane. In terms of biological role, part of a membrane-bound complex that couples electron transfer with translocation of ions across the membrane. Required to maintain the reduced state of SoxR. The chain is Ion-translocating oxidoreductase complex subunit E from Salmonella paratyphi A (strain ATCC 9150 / SARB42).